Here is a 700-residue protein sequence, read N- to C-terminus: Receptor-type tyrosine-protein phosphatase epsilon (700 aa).

The first 19 residues, 1 to 19, serve as a signal peptide directing secretion; sequence MEPLCPLLLVGFSLPLARA. Residues 20–46 lie on the Extracellular side of the membrane; the sequence is LRGNETTADSNETTTTSGPPDPGASQP. Residues Asn23 and Asn30 are each glycosylated (N-linked (GlcNAc...) asparagine). A helical membrane pass occupies residues 47-69; sequence LLAWLLLPLLLLLLVLLLAAYFF. The Cytoplasmic segment spans residues 70–700; sequence RFRKQRKAVV…DIFSDYANFK (631 aa). 2 Tyrosine-protein phosphatase domains span residues 135–394 and 426–689; these read FREE…LLEY and LEEE…VQDF. Substrate contacts are provided by residues Asp303, 335–341, and Gln379; that span reads CSAGVGR. The active-site Phosphocysteine intermediate is Cys335. Cys630 serves as the catalytic Phosphocysteine intermediate. Tyr696 is subject to Phosphotyrosine.

The protein belongs to the protein-tyrosine phosphatase family. Receptor class 4 subfamily. In terms of assembly, monomer. Isoform 2: Homodimer. Can form oligomers. Dimerization is increased by oxidative stress and decreased by EGFR. Isoform 2 interacts with GRB2. A catalytically active cytoplasmic form (p65) is produced by proteolytic cleavage of either isoform 1, isoform 2 or isoform 3. Post-translationally, isoform 1 and isoform 2 are phosphorylated on tyrosine residues by tyrosine kinase Neu. In terms of processing, isoform 1 is glycosylated. As to expression, expressed in giant cell tumor (osteoclastoma rich in multinucleated osteoclastic cells).

The protein resides in the cell membrane. It localises to the cytoplasm. The catalysed reaction is O-phospho-L-tyrosyl-[protein] + H2O = L-tyrosyl-[protein] + phosphate. Functionally, isoform 1 plays a critical role in signaling transduction pathways and phosphoprotein network topology in red blood cells. May play a role in osteoclast formation and function. In terms of biological role, isoform 2 acts as a negative regulator of insulin receptor (IR) signaling in skeletal muscle. Regulates insulin-induced tyrosine phosphorylation of insulin receptor (IR) and insulin receptor substrate 1 (IRS-1), phosphorylation of protein kinase B and glycogen synthase kinase-3 and insulin induced stimulation of glucose uptake. Its function is as follows. Isoform 1 and isoform 2 act as a negative regulator of FceRI-mediated signal transduction leading to cytokine production and degranulation, most likely by acting at the level of SYK to affect downstream events such as phosphorylation of SLP76 and LAT and mobilization of Ca(2+). This is Receptor-type tyrosine-protein phosphatase epsilon (PTPRE) from Homo sapiens (Human).